Here is a 239-residue protein sequence, read N- to C-terminus: Probable transcriptional regulatory protein CD630_07950 (239 aa).

The protein belongs to the TACO1 family.

The protein resides in the cytoplasm. This chain is Probable transcriptional regulatory protein CD630_07950, found in Clostridioides difficile (strain 630) (Peptoclostridium difficile).